The chain runs to 409 residues: TNF receptor-associated factor family protein DDB_G0273435/DDB_G0273505 (409 aa).

The RING-type; degenerate zinc-finger motif lies at 20-59 (CQLCCNLMNESVSCPNGHCLCKGCFHKQIETVKSECPICC). TRAF-type zinc fingers lie at residues 75–145 (KHIN…EIEN) and 145–201 (NHQD…HELS). Positions 221–250 (HQSLLKSTSKQLKQLRSSCEELETKLINND) form a coiled coil. One can recognise an MATH domain in the interval 252–380 (SFNGRWIIKQ…NDQLIIKFNI (129 aa)).

Belongs to the TNF receptor-associated factor family. A subfamily.

The protein resides in the cytoplasm. Its function is as follows. Probable adapter protein and signal transducer that links members of the tumor necrosis factor receptor family to different signaling pathways by association with the receptor cytoplasmic domain and kinases. The chain is TNF receptor-associated factor family protein DDB_G0273435/DDB_G0273505 from Dictyostelium discoideum (Social amoeba).